The primary structure comprises 365 residues: tRNA/tmRNA (uracil-C(5))-methyltransferase (365 aa).

S-adenosyl-L-methionine contacts are provided by Q189, Y217, N222, E238, and D298. Catalysis depends on C323, which acts as the Nucleophile. The active-site Proton acceptor is E357.

This sequence belongs to the class I-like SAM-binding methyltransferase superfamily. RNA M5U methyltransferase family. TrmA subfamily.

It carries out the reaction uridine(54) in tRNA + S-adenosyl-L-methionine = 5-methyluridine(54) in tRNA + S-adenosyl-L-homocysteine + H(+). It catalyses the reaction uridine(341) in tmRNA + S-adenosyl-L-methionine = 5-methyluridine(341) in tmRNA + S-adenosyl-L-homocysteine + H(+). Functionally, dual-specificity methyltransferase that catalyzes the formation of 5-methyluridine at position 54 (m5U54) in all tRNAs, and that of position 341 (m5U341) in tmRNA (transfer-mRNA). The sequence is that of tRNA/tmRNA (uracil-C(5))-methyltransferase from Shewanella baltica (strain OS185).